Here is a 51-residue protein sequence, read N- to C-terminus: ATP synthase protein 8 (51 aa).

A helical membrane pass occupies residues 7–27; it reads LNWAMMTIMFSLSLLVSMIIL.

The protein belongs to the ATPase protein 8 family. F-type ATPases have 2 components, CF(1) - the catalytic core - and CF(0) - the membrane proton channel.

It is found in the mitochondrion membrane. Its function is as follows. Mitochondrial membrane ATP synthase (F(1)F(0) ATP synthase or Complex V) produces ATP from ADP in the presence of a proton gradient across the membrane which is generated by electron transport complexes of the respiratory chain. F-type ATPases consist of two structural domains, F(1) - containing the extramembraneous catalytic core and F(0) - containing the membrane proton channel, linked together by a central stalk and a peripheral stalk. During catalysis, ATP synthesis in the catalytic domain of F(1) is coupled via a rotary mechanism of the central stalk subunits to proton translocation. Part of the complex F(0) domain. Minor subunit located with subunit a in the membrane. This is ATP synthase protein 8 (MT-ATP8) from Limulus polyphemus (Atlantic horseshoe crab).